A 583-amino-acid polypeptide reads, in one-letter code: MGQGESIPSRQIQRDASMQAVSSESENINDSDRQNSGFSRLWNRFPSLQRVLGLRRAKRHRNDEGNSENGNRDRTTERSAFRSRYRGSLLNRNSPSLRSLSPPATPATPRSRIEGESQTSAIPQTDRLILENHQQEFERAARRFRSSIAALRNLNTQNNQSTLASNHEDENVSSSGGQEMQDHGSVNNLESPGTAIGRLPVRSVTSLADSNMEDYTRAVMNYINNSENTQQASVSPEESQLVMLSRFVFSVASGWVSVLMNSSSAHQSNNLEFPSSISGNVESGNVAFDEFLSLLHAGNLVQAMNAETNPRTAELIANAVDLEEESGPINLFRTFRFDNLHRNHEGQEVIPIIIVGIRSLRNSGSDEDDQPSADSPTLMHPSDLISSLVNSQNQTTSVSDNTGPNENVNEAEHISEDEQASTATDVNGISDNNGSSTQQAPETRNNNSQTDHQLPRSWAIYVREAFVPQNHPVLRAPSLFTDSPTYEDMLLLNSIIGIEKPPVASQKDLEKAGGVFPFSGTDERCLVCLSNFELNDECRRLKQCNHFFHRECIDQWLTSSQNSCPLCRTKGVASASTPSSPKP.

The span at methionine 1–phenylalanine 38 shows a compositional bias: polar residues. Disordered stretches follow at residues methionine 1–serine 39, glycine 53–glutamine 124, threonine 156–glycine 197, and asparagine 362–histidine 452. Over residues glycine 70 to alanine 80 the composition is skewed to basic and acidic residues. Over residues serine 88–proline 102 the composition is skewed to low complexity. Polar residues-rich tracts occupy residues threonine 156–serine 165, valine 172–serine 191, leucine 384–valine 408, and alanine 420–histidine 452. Residues cysteine 525–arginine 568 form an RING-type zinc finger. The residue at position 580 (serine 580) is a Phosphoserine.

The protein localises to the membrane. This is an uncharacterized protein from Schizosaccharomyces pombe (strain 972 / ATCC 24843) (Fission yeast).